An 895-amino-acid chain; its full sequence is Alanine--tRNA ligase (895 aa).

Residues His577, His581, Cys680, and His684 each coordinate Zn(2+).

This sequence belongs to the class-II aminoacyl-tRNA synthetase family. Requires Zn(2+) as cofactor.

The protein localises to the cytoplasm. It catalyses the reaction tRNA(Ala) + L-alanine + ATP = L-alanyl-tRNA(Ala) + AMP + diphosphate. Catalyzes the attachment of alanine to tRNA(Ala) in a two-step reaction: alanine is first activated by ATP to form Ala-AMP and then transferred to the acceptor end of tRNA(Ala). Also edits incorrectly charged Ser-tRNA(Ala) and Gly-tRNA(Ala) via its editing domain. This Kocuria rhizophila (strain ATCC 9341 / DSM 348 / NBRC 103217 / DC2201) protein is Alanine--tRNA ligase.